An 871-amino-acid polypeptide reads, in one-letter code: Protein translocase subunit SecA (871 aa).

Residues Gln80, 98–102, and Asp537 contribute to the ATP site; that span reads GEGKT.

It belongs to the SecA family. Monomer and homodimer. Part of the essential Sec protein translocation apparatus which comprises SecA, SecYEG and auxiliary proteins SecDF. Other proteins may also be involved. A single SecA monomer interacts with SecY in the channel.

Its subcellular location is the cell inner membrane. It is found in the cytoplasm. It catalyses the reaction ATP + H2O + cellular proteinSide 1 = ADP + phosphate + cellular proteinSide 2.. Part of the Sec protein translocase complex. Interacts with the SecYEG preprotein conducting channel. Has a central role in coupling the hydrolysis of ATP to the transfer of proteins into and across the cell membrane, serving as an ATP-driven molecular motor driving the stepwise translocation of polypeptide chains across the membrane. The chain is Protein translocase subunit SecA from Thermotoga maritima (strain ATCC 43589 / DSM 3109 / JCM 10099 / NBRC 100826 / MSB8).